A 437-amino-acid chain; its full sequence is Histidine--tRNA ligase (437 aa).

It belongs to the class-II aminoacyl-tRNA synthetase family. Homodimer.

Its subcellular location is the cytoplasm. The enzyme catalyses tRNA(His) + L-histidine + ATP = L-histidyl-tRNA(His) + AMP + diphosphate + H(+). The chain is Histidine--tRNA ligase from Leptospira biflexa serovar Patoc (strain Patoc 1 / Ames).